The primary structure comprises 233 residues: UPF0280 protein AF_0649 (233 aa).

This sequence belongs to the UPF0280 family.

This Archaeoglobus fulgidus (strain ATCC 49558 / DSM 4304 / JCM 9628 / NBRC 100126 / VC-16) protein is UPF0280 protein AF_0649.